We begin with the raw amino-acid sequence, 184 residues long: ATP synthase subunit b, chloroplastic (184 aa).

The helical transmembrane segment at Leu-27–Leu-49 threads the bilayer.

This sequence belongs to the ATPase B chain family. As to quaternary structure, F-type ATPases have 2 components, F(1) - the catalytic core - and F(0) - the membrane proton channel. F(1) has five subunits: alpha(3), beta(3), gamma(1), delta(1), epsilon(1). F(0) has four main subunits: a(1), b(1), b'(1) and c(10-14). The alpha and beta chains form an alternating ring which encloses part of the gamma chain. F(1) is attached to F(0) by a central stalk formed by the gamma and epsilon chains, while a peripheral stalk is formed by the delta, b and b' chains.

The protein resides in the plastid. It localises to the chloroplast thylakoid membrane. Functionally, f(1)F(0) ATP synthase produces ATP from ADP in the presence of a proton or sodium gradient. F-type ATPases consist of two structural domains, F(1) containing the extramembraneous catalytic core and F(0) containing the membrane proton channel, linked together by a central stalk and a peripheral stalk. During catalysis, ATP synthesis in the catalytic domain of F(1) is coupled via a rotary mechanism of the central stalk subunits to proton translocation. Its function is as follows. Component of the F(0) channel, it forms part of the peripheral stalk, linking F(1) to F(0). The polypeptide is ATP synthase subunit b, chloroplastic (Arabidopsis thaliana (Mouse-ear cress)).